A 218-amino-acid chain; its full sequence is Nonsense-mediated decay protein 4 (218 aa).

It localises to the cytoplasm. Its function is as follows. Involved in nonsense-mediated decay of mRNAs containing premature stop codons. The polypeptide is Nonsense-mediated decay protein 4 (NMD4) (Saccharomyces cerevisiae (strain ATCC 204508 / S288c) (Baker's yeast)).